The primary structure comprises 537 residues: Tyrosine-protein kinase Yes (537 aa).

Positions 1–22 are enriched in basic and acidic residues; that stretch reads MGCIKSKEDKGPSIKYRTEPKP. The interval 1–60 is disordered; sequence MGCIKSKEDKGPSIKYRTEPKPDPGSQYGADPTQATQSPGIKGPAPNFNSHSMTPFGGSS. G2 carries N-myristoyl glycine lipidation. A lipid anchor (S-palmitoyl cysteine; in membrane form) is attached at C3. Residues 85 to 146 enclose the SH3 domain; the sequence is GGVTVFVALY…PSNYVAPADS (62 aa). The SH2 domain occupies 152–249; that stretch reads WYFGKMGRKD…GLCYRLTTVC (98 aa). The Protein kinase domain occupies 271–524; it reads LRLDVKLGQG…YIQSFLEDYF (254 aa). ATP contacts are provided by residues 277 to 285 and K299; that span reads LGQGCFGEV. The active-site Proton acceptor is D390. Y420 carries the post-translational modification Phosphotyrosine; by autocatalysis. Position 531 is a phosphotyrosine; by CSK (Y531).

Belongs to the protein kinase superfamily. Tyr protein kinase family. SRC subfamily. Post-translationally, autophosphorylated at Tyr-420 inducing activation. In terms of processing, palmitoylation at Cys-3 promotes membrane localization.

It localises to the cell membrane. The protein localises to the cytoplasm. Its subcellular location is the cytoskeleton. It is found in the microtubule organizing center. The protein resides in the centrosome. It localises to the cytosol. The protein localises to the cell junction. It carries out the reaction L-tyrosyl-[protein] + ATP = O-phospho-L-tyrosyl-[protein] + ADP + H(+). Functionally, non-receptor protein tyrosine kinase that is involved in the regulation of cell growth and survival, apoptosis, cell-cell adhesion, cytoskeleton remodeling, differentiation, G2/M progression and cytokinesis. This Xenopus laevis (African clawed frog) protein is Tyrosine-protein kinase Yes (yes1).